Consider the following 240-residue polypeptide: Cytochrome c-551 (240 aa).

Positions 41, 44, 45, 128, 132, and 133 each coordinate heme c.

Post-translationally, binds 2 heme c groups per subunit.

This is Cytochrome c-551 from Rhodocyclus tenuis (Rhodospirillum tenue).